The sequence spans 300 residues: Zinc finger CCCH-type antiviral protein 1-like (300 aa).

Residue A2 is modified to N-acetylalanine. Polar residues predominate over residues 252–263 (NTDNSSPSTEHS). Positions 252-300 (NTDNSSPSTEHSQGLEKQGVHAAGAAEAGPLASVPAQSAKKPCPVSCEK) are disordered. Positions 271-283 (VHAAGAAEAGPLA) are enriched in low complexity.

The protein is Zinc finger CCCH-type antiviral protein 1-like (ZC3HAV1L) of Homo sapiens (Human).